Reading from the N-terminus, the 318-residue chain is NADH-ubiquinone oxidoreductase chain 1 (318 aa).

Helical transmembrane passes span 2-22 (FMINILTLILPILLAVAFLTL), 70-90 (MFIIAPVLALALALTMWSPLP), 100-120 (LGVLFMLAMSSLAVYSILWSG), 136-156 (VAQTISYEVTLAIILLSVLLM), 172-192 (LWLLFPSWPLAMMWFISTLAE), 222-242 (LFFLAEYANIIMMNMFTAILF), 253-273 (ELYTTNLIIKTLLLTMSFLWI), and 294-314 (LPLTLALCMWHISLPIMTASI).

The protein belongs to the complex I subunit 1 family. In terms of assembly, core subunit of respiratory chain NADH dehydrogenase (Complex I) which is composed of 45 different subunits.

The protein localises to the mitochondrion inner membrane. It catalyses the reaction a ubiquinone + NADH + 5 H(+)(in) = a ubiquinol + NAD(+) + 4 H(+)(out). In terms of biological role, core subunit of the mitochondrial membrane respiratory chain NADH dehydrogenase (Complex I) which catalyzes electron transfer from NADH through the respiratory chain, using ubiquinone as an electron acceptor. Essential for the catalytic activity and assembly of complex I. In Balaenoptera musculus (Blue whale), this protein is NADH-ubiquinone oxidoreductase chain 1 (MT-ND1).